Here is a 388-residue protein sequence, read N- to C-terminus: Alanine racemase, catabolic (388 aa).

Lysine 46 (proton acceptor; specific for D-alanine) is an active-site residue. Lysine 46 is modified (N6-(pyridoxal phosphate)lysine). Arginine 145 contributes to the substrate binding site. The Proton acceptor; specific for L-alanine role is filled by tyrosine 267. Position 315 (methionine 315) interacts with substrate.

The protein belongs to the alanine racemase family. It depends on pyridoxal 5'-phosphate as a cofactor.

The enzyme catalyses L-alanine = D-alanine. Functionally, isomerizes L-alanine to D-alanine which is then oxidized to pyruvate by DadA. The protein is Alanine racemase, catabolic (dadB) of Agrobacterium fabrum (strain C58 / ATCC 33970) (Agrobacterium tumefaciens (strain C58)).